The following is a 909-amino-acid chain: SCY1-like protein 2 B (909 aa).

One can recognise a Protein kinase domain in the interval 39–343; that stretch reads YELLDQIGSA…ALDFTGSNFF (305 aa). HEAT repeat units follow at residues 311–348, 350–382, 383–401, 402–439, 465–502, 499–537, and 578–617; these read SIPS…SDAR, RALR…DFDS, RVLR…RNLV, LQPI…TASG, VLPL…VVRQ, VVRQ…TLDK, and FTAE…KIEE. Disordered stretches follow at residues 624-772 and 804-909; these read NDSG…VAST and SASL…LDLL. Polar residues-rich tracts occupy residues 638–648, 678–712, 724–747, 804–828, and 835–852; these read NGLQFQSSTQI, PASS…TAPT, RQSS…TSFA, SASL…QDPL, and KQSQ…NNQK.

The protein belongs to the protein kinase superfamily. Interacts with VTI11, VTI12 and CHC1. Expressed in roots, seedlings, leaves, stems, flowers, and, at low levels, in siliques.

The protein resides in the golgi apparatus membrane. It localises to the golgi apparatus. It is found in the trans-Golgi network membrane. Its subcellular location is the prevacuolar compartment membrane. In terms of biological role, probably inactive kinase. Component of the AP2-containing clathrin coat that regulates clathrin-dependent trafficking at plasma membrane, TGN and endosomal system. Together with SCYL2B, required for cell growth, plant growth and development. Essential for polarized root hair development probably by mediating the root hair tip localization of cellulose synthase-like D3 (CSLD3). This is SCY1-like protein 2 B from Arabidopsis thaliana (Mouse-ear cress).